The chain runs to 607 residues: Karyogamy meiotic segregation protein 1 (607 aa).

The segment at 83-135 is disordered; the sequence is DDSFANQAEKPSMEQQNSKNSIKEDANEHSVNSAHSKSSSNASPESLNPSQMM. Residues 111–132 are compositionally biased toward low complexity; the sequence is HSVNSAHSKSSSNASPESLNPS.

As to quaternary structure, interacts with mcp1 and sad1.

It localises to the cytoplasm. The protein resides in the cytoskeleton. The protein localises to the microtubule organizing center. Its subcellular location is the spindle pole body. Has a role in karyogamy, recombination and segregation during meiosis. Although it has been shown to associate with the spindle pole body it is unlikely to be involved in its formation or maintenance. The polypeptide is Karyogamy meiotic segregation protein 1 (kms1) (Schizosaccharomyces pombe (strain 972 / ATCC 24843) (Fission yeast)).